A 520-amino-acid chain; its full sequence is GMP synthase [glutamine-hydrolyzing] (520 aa).

The 194-residue stretch at 9-202 folds into the Glutamine amidotransferase type-1 domain; it reads TILIIDFGSQ…VHRIVGVKPG (194 aa). Cys86 serves as the catalytic Nucleophile. Active-site residues include His176 and Glu178. Residues 203–395 form the GMPS ATP-PPase domain; sequence WTMGAYREQA…LGLPDSFIGR (193 aa). ATP is bound at residue 230–236; it reads SGGVDSS.

As to quaternary structure, homodimer.

The enzyme catalyses XMP + L-glutamine + ATP + H2O = GMP + L-glutamate + AMP + diphosphate + 2 H(+). The protein operates within purine metabolism; GMP biosynthesis; GMP from XMP (L-Gln route): step 1/1. Its function is as follows. Catalyzes the synthesis of GMP from XMP. The chain is GMP synthase [glutamine-hydrolyzing] from Brucella melitensis biotype 2 (strain ATCC 23457).